Consider the following 938-residue polypeptide: E3 ubiquitin-protein ligase CBL-B (938 aa).

The interval 35-167 (PPKQAAADRR…KAIFPNGQFQ (133 aa)) is 4H. One can recognise a Cbl-PTB domain in the interval 35 to 343 (PPKQAAADRR…GRSYNPDLTG (309 aa)). Positions 168–240 (GDNFRITKAD…FEFDIFTRLF (73 aa)) are EF-hand-like. Positions 221, 223, 225, 227, and 232 each coordinate Ca(2+). Residues 241–343 (QPWGSILRNW…GRSYNPDLTG (103 aa)) are SH2-like. Residue serine 282 is modified to Phosphoserine; by PKC/PRKCQ. Position 286 (arginine 286) interacts with 4-O-phospho-L-tyrosine. The segment at 344–372 (LCEPTPHDHIKVTQEQYELYCEMGSTFQL) is linker. Position 363 is a phosphotyrosine (tyrosine 363). The RING-type zinc finger occupies 373-412 (CKICAENDKDVKIEPCGHLMCTSCLTAWQESDGQGCPFCR). The interval 465-588 (ASVRKCTDRQ…SVPSRDQPMP (124 aa)) is disordered. Residues 473–486 (RQNSPVTSPGSSPL) show a composition bias toward polar residues. A phosphoserine mark is found at serine 476, serine 480, serine 484, serine 521, serine 525, and serine 529. Positions 543 to 567 (PLPAPPPPLRDPPPPPERPPPIPPD) are interaction with VAV1. The span at 544–566 (LPAPPPPLRDPPPPPERPPPIPP) shows a compositional bias: pro residues. Serine 633 carries the post-translational modification Phosphoserine. A phosphotyrosine mark is found at tyrosine 664 and tyrosine 708. 2 disordered regions span residues 702–725 (EEDDDEYKIPSSHPVSLNSQPSHC) and 771–885 (DALP…EAAL). Residues 714-724 (HPVSLNSQPSH) show a composition bias toward polar residues. Residues 775-784 (PSLPPPPPPA) show a composition bias toward pro residues. Positions 794–804 (PPGSSSRPSSG) are enriched in low complexity. Positions 839 to 855 (NRASQDYDQLPSSSDGS) are enriched in polar residues. Phosphotyrosine is present on tyrosine 845. An interaction with SH3KBP1 region spans residues 847–883 (QLPSSSDGSQAPARPPKPRPRRTAPEIHHRKPHGPEA). Positions 862 to 878 (PKPRPRRTAPEIHHRKP) are enriched in basic residues. The region spanning 887 to 926 (NVDAKIAKLMGEGYAFEEVKRALEIAQNNLEVARSILREF) is the UBA domain.

As to quaternary structure, interacts with SH3 domain-containing proteins LCK, CRK and SORBS1. Interacts with LCP2 and ZAP70. Interacts with CBL. Interacts with SH3 domain-containing proteins VAV1, FYN, FGR, PLCG1, GRB2, CRKL, PIK3R1 and SH3KBP1/CIN85. Identified in heterotrimeric complexes with SH3KBP1/CIN85, CD2AP and ARHGEF7, where one CBLB peptide binds two copies of the other protein. Interacts with poly-ubiquitinated proteins. Dimerization is required for the binding of poly-ubiquitin, but not for the binding of mono-ubiquitin. Interacts with EGFR (phosphorylated). Interacts with IFT20. In terms of processing, phosphorylated on tyrosine and serine residues upon TCR or BCR activation, and upon various types of cell stimulation. Post-translationally, auto-ubiquitinated upon EGF-mediated cell activation or upon T-cell costimulation by CD28; which promotes proteasomal degradation.

It localises to the cytoplasm. The catalysed reaction is S-ubiquitinyl-[E2 ubiquitin-conjugating enzyme]-L-cysteine + [acceptor protein]-L-lysine = [E2 ubiquitin-conjugating enzyme]-L-cysteine + N(6)-ubiquitinyl-[acceptor protein]-L-lysine.. It participates in protein modification; protein ubiquitination. In terms of biological role, E3 ubiquitin-protein ligase which accepts ubiquitin from specific E2 ubiquitin-conjugating enzymes, and transfers it to substrates, generally promoting their degradation by the proteasome. Negatively regulates TCR (T-cell receptor), BCR (B-cell receptor) and FCER1 (high affinity immunoglobulin epsilon receptor) signal transduction pathways. In naive T-cells, inhibits VAV1 activation upon TCR engagement and imposes a requirement for CD28 costimulation for proliferation and IL-2 production. Also acts by promoting PIK3R1/p85 ubiquitination, which impairs its recruitment to the TCR and subsequent activation. In activated T-cells, inhibits PLCG1 activation and calcium mobilization upon restimulation and promotes anergy. In B-cells, acts by ubiquitinating SYK and promoting its proteasomal degradation. Slightly promotes SRC ubiquitination. May be involved in EGFR ubiquitination and internalization. May be functionally coupled with the E2 ubiquitin-protein ligase UB2D3. In association with CBL, required for proper feedback inhibition of ciliary platelet-derived growth factor receptor-alpha (PDGFRA) signaling pathway via ubiquitination and internalization of PDGFRA. This Rattus norvegicus (Rat) protein is E3 ubiquitin-protein ligase CBL-B (Cblb).